Consider the following 897-residue polypeptide: Autophagy-related protein 9 (897 aa).

Over 1-256 the chain is Cytoplasmic; it reads MEQSEDTIQH…DVYSYYLGNG (256 aa). Disordered regions lie at residues 46 to 106, 112 to 131, and 195 to 224; these read RSGS…QELE, TIAK…QADS, and ENQL…RPSP. Residues 80–93 show a composition bias toward polar residues; the sequence is ENMTSYNGAQGSGS. Residues 214–224 show a composition bias toward low complexity; that stretch reads ARLSSPSRPSP. A helical transmembrane segment spans residues 257–277; the sequence is FYCIMIEKILNLLTLLFIVFI. Residues 278–314 lie on the Lumenal side of the membrane; that stretch reads STYMSHCIDYSKLPNGHKFSDVRVDQCYETQITGTTK. A helical membrane pass occupies residues 315–335; the sequence is LLFWIFGVFVVLKVVQMYFDF. At 336 to 431 the chain is on the cytoplasmic side; sequence RRIHEIHNFY…PLYRTSTLTK (96 aa). The stretch at 432 to 452 is an intramembrane region; the sequence is TLEWNIHLCIIGFAFNEAGFL. At 453-472 the chain is on the cytoplasmic side; that stretch reads KQSFLNPAQREFLSEELKKR. The chain crosses the membrane as a helical span at residues 473 to 493; that stretch reads FILAGFLNIILAPFLVVYFVL. The Lumenal portion of the chain corresponds to 494 to 558; that stretch reads LYFFRYFNEY…NQFPNALGDY (65 aa). Residues 559–579 form a helical membrane-spanning segment; the sequence is FFKFVKFISGSFVAILALMTV. At 580–661 the chain is on the cytoplasmic side; that stretch reads LDPENFLNFE…QEFCKLYNLR (82 aa). Residues 662–682 lie within the membrane without spanning it; it reads VILLLRELASLIMTPFILWFS. At 683-897 the chain is on the cytoplasmic side; the sequence is LPNSAESIVD…QYYRKSDVGR (215 aa).

This sequence belongs to the ATG9 family. In terms of assembly, homotrimer; forms a homotrimer with a central pore that forms a path between the two membrane leaflets. Phosphorylated by ATG1. ATG1 phosphorylation is required for preautophagosome elongation.

Its subcellular location is the preautophagosomal structure membrane. The protein resides in the cytoplasmic vesicle membrane. It is found in the golgi apparatus membrane. The protein localises to the endoplasmic reticulum membrane. It catalyses the reaction a 1,2-diacyl-sn-glycero-3-phosphocholine(in) = a 1,2-diacyl-sn-glycero-3-phosphocholine(out). The catalysed reaction is a 1,2-diacyl-sn-glycero-3-phospho-L-serine(in) = a 1,2-diacyl-sn-glycero-3-phospho-L-serine(out). It carries out the reaction a 1,2-diacyl-sn-glycero-3-phosphoethanolamine(in) = a 1,2-diacyl-sn-glycero-3-phosphoethanolamine(out). The enzyme catalyses a 1,2-diacyl-sn-glycero-3-phospho-(1D-myo-inositol-3-phosphate)(in) = a 1,2-diacyl-sn-glycero-3-phospho-(1D-myo-inositol-3-phosphate)(out). In terms of biological role, phospholipid scramblase involved in autophagy and cytoplasm to vacuole transport (Cvt) vesicle formation. Cycles between the preautophagosomal structure/phagophore assembly site (PAS) and the cytoplasmic vesicle pool and supplies membrane for the growing autophagosome. Lipid scramblase activity plays a key role in preautophagosomal structure/phagophore assembly by distributing the phospholipids that arrive through ATG2 from the cytoplasmic to the luminal leaflet of the bilayer, thereby driving autophagosomal membrane expansion. Required for mitophagy. Also involved in endoplasmic reticulum-specific autophagic process and is essential for the survival of cells subjected to severe ER stress. Different machineries are required for anterograde trafficking to the PAS during either the Cvt pathway or bulk autophagy and for retrograde trafficking. The chain is Autophagy-related protein 9 (ATG9) from Eremothecium gossypii (strain ATCC 10895 / CBS 109.51 / FGSC 9923 / NRRL Y-1056) (Yeast).